Here is a 307-residue protein sequence, read N- to C-terminus: Cysteine synthase (307 aa).

Residue Lys42 is modified to N6-(pyridoxal phosphate)lysine. Residues Asn72, 176 to 180 (GTGGH), and Ser263 each bind pyridoxal 5'-phosphate.

The protein belongs to the cysteine synthase/cystathionine beta-synthase family. Requires pyridoxal 5'-phosphate as cofactor.

It catalyses the reaction O-acetyl-L-serine + hydrogen sulfide = L-cysteine + acetate. The protein operates within amino-acid biosynthesis; L-cysteine biosynthesis; L-cysteine from L-serine: step 2/2. The polypeptide is Cysteine synthase (cysK) (Flavobacterium sp. (strain K3-15 / DSM ID92-509)).